Here is a 141-residue protein sequence, read N- to C-terminus: Large ribosomal subunit protein bL21 (141 aa).

The tract at residues 111–141 (ATAPSRTEAAPESNPEAAPSAAATGIPADEE) is disordered. The span at 118-133 (EAAPESNPEAAPSAAA) shows a compositional bias: low complexity.

The protein belongs to the bacterial ribosomal protein bL21 family. As to quaternary structure, part of the 50S ribosomal subunit. Contacts protein L20.

Its function is as follows. This protein binds to 23S rRNA in the presence of protein L20. The polypeptide is Large ribosomal subunit protein bL21 (Synechococcus sp. (strain JA-2-3B'a(2-13)) (Cyanobacteria bacterium Yellowstone B-Prime)).